Consider the following 279-residue polypeptide: Movement protein (279 aa).

It belongs to the cucumovirus movement protein family.

The protein resides in the host cell junction. It localises to the host plasmodesma. Its function is as follows. Transports viral genome to neighboring plant cells directly through plasmosdesmata, without any budding. The movement protein allows efficient cell to cell propagation, by bypassing the host cell wall barrier. Acts by forming a tubular structure at the host plasmodesmata, enlarging it enough to allow free passage of virion capsids. This chain is Movement protein, found in Cucumis sativus (Cucumber).